The primary structure comprises 296 residues: mRNA 3'-end-processing protein RNA15 (296 aa).

Residues 18-96 form the RRM domain; the sequence is RVVYLGSIPY…RFLKCGYSSN (79 aa). Residues 99-140 form a disordered region; sequence ISGVSQQQQQQYNNINGNNNNNGNNNNNSNGPDFQNSGNANF. The span at 100-135 shows a compositional bias: low complexity; the sequence is SGVSQQQQQQYNNINGNNNNNGNNNNNSNGPDFQNS.

As to quaternary structure, component of the CFIA complex, which is composed of RNA14, RNA15, PCF11 and CLP1. Interacts directly with RNA14. Interacts with polyadenylate-binding protein PAB1.

It localises to the nucleus. Its function is as follows. RNA-binding component of the cleavage factor IA (CFIA) complex, which is involved in the endonucleolytic cleavage during polyadenylation-dependent pre-mRNA 3'-end formation and cooperates with the cleavage factor NAB4/CFIB and the cleavage and polyadenylation factor (CPF) complex. Binds to A-rich RNA sequence elements. The protein is mRNA 3'-end-processing protein RNA15 (RNA15) of Saccharomyces cerevisiae (strain ATCC 204508 / S288c) (Baker's yeast).